The following is a 360-amino-acid chain: Photosystem II protein D1 (360 aa).

3 helical membrane-spanning segments follow: residues 29–46, 118–133, and 142–156; these read YIGW…TATT, HFLL…EWEL, and WICV…AATA. His-118 contacts chlorophyll a. Tyr-126 lines the pheophytin a pocket. 2 residues coordinate [CaMn4O5] cluster: Asp-170 and Glu-189. Residues 197-218 traverse the membrane as a helical segment; it reads FHMAGVAGVFGGALFSAMHGSL. His-198 serves as a coordination point for chlorophyll a. A quinone-binding positions include His-215 and 264 to 265; that span reads SF. His-215 is a Fe cation binding site. Position 272 (His-272) interacts with Fe cation. A helical transmembrane segment spans residues 274-288; that stretch reads FLGLWPVVGIWLTSI. [CaMn4O5] cluster is bound by residues His-332, Glu-333, Asp-342, and Ala-344. Residues 345 to 360 constitute a propeptide that is removed on maturation; it reads DNSLLPVASSSPSINS.

The protein belongs to the reaction center PufL/M/PsbA/D family. In terms of assembly, PSII is composed of 1 copy each of membrane proteins PsbA, PsbB, PsbC, PsbD, PsbE, PsbF, PsbH, PsbI, PsbJ, PsbK, PsbL, PsbM, PsbT, PsbY, PsbZ, Psb30/Ycf12, at least 3 peripheral proteins of the oxygen-evolving complex and a large number of cofactors. It forms dimeric complexes. It depends on The D1/D2 heterodimer binds P680, chlorophylls that are the primary electron donor of PSII, and subsequent electron acceptors. It shares a non-heme iron and each subunit binds pheophytin, quinone, additional chlorophylls, carotenoids and lipids. D1 provides most of the ligands for the Mn4-Ca-O5 cluster of the oxygen-evolving complex (OEC). There is also a Cl(-1) ion associated with D1 and D2, which is required for oxygen evolution. The PSII complex binds additional chlorophylls, carotenoids and specific lipids. as a cofactor. In terms of processing, tyr-161 forms a radical intermediate that is referred to as redox-active TyrZ, YZ or Y-Z.

Its subcellular location is the plastid. It localises to the chloroplast thylakoid membrane. The enzyme catalyses 2 a plastoquinone + 4 hnu + 2 H2O = 2 a plastoquinol + O2. Photosystem II (PSII) is a light-driven water:plastoquinone oxidoreductase that uses light energy to abstract electrons from H(2)O, generating O(2) and a proton gradient subsequently used for ATP formation. It consists of a core antenna complex that captures photons, and an electron transfer chain that converts photonic excitation into a charge separation. The D1/D2 (PsbA/PsbD) reaction center heterodimer binds P680, the primary electron donor of PSII as well as several subsequent electron acceptors. The protein is Photosystem II protein D1 of Cyanidium caldarium (Red alga).